A 376-amino-acid polypeptide reads, in one-letter code: cAMP-dependent protein kinase type I regulatory subunit (376 aa).

Residues 1–131 are dimerization and phosphorylation; it reads MSYMMAKTLE…ALSKAIAKNV (131 aa). A disordered region spans residues 72–93; the sequence is PDDCEDLSPMPQTAAPPVRRRG. Positions 91 to 95 match the Pseudophosphorylation motif motif; it reads RRGGI. Residue Ser96 is modified to Phosphoserine. 3',5'-cyclic AMP is bound by residues 132-247, Glu197, Arg206, 250-371, Glu321, and Arg330; these read LFAH…FLSR and ILES…YNSF.

Belongs to the cAMP-dependent kinase regulatory chain family. As to quaternary structure, tetramer, composed of 2 regulatory (R) and 2 catalytic (C) subunits. In the presence of cAMP it dissociates into 2 active monomeric C subunits and an R dimer. Post-translationally, the pseudophosphorylation site binds to the substrate-binding region of the catalytic chain but is not phosphorylated. The physiological significance of phosphorylations by other kinases is unclear.

The protein is cAMP-dependent protein kinase type I regulatory subunit (Pka-R1) of Drosophila melanogaster (Fruit fly).